The following is a 461-amino-acid chain: tRNA modification GTPase MnmE (461 aa).

R23, E84, and R123 together coordinate (6S)-5-formyl-5,6,7,8-tetrahydrofolate. The TrmE-type G domain occupies 216–383 (GARAALIGRP…LGATVARLLL (168 aa)). Residue N226 coordinates K(+). Residues 226–231 (NAGKSS), 245–251 (TPIPGTT), and 270–273 (DTAG) contribute to the GTP site. Position 230 (S230) interacts with Mg(2+). 3 residues coordinate K(+): T245, I247, and T250. Position 251 (T251) interacts with Mg(2+). (6S)-5-formyl-5,6,7,8-tetrahydrofolate is bound at residue K461.

Belongs to the TRAFAC class TrmE-Era-EngA-EngB-Septin-like GTPase superfamily. TrmE GTPase family. As to quaternary structure, homodimer. Heterotetramer of two MnmE and two MnmG subunits. It depends on K(+) as a cofactor.

Its subcellular location is the cytoplasm. Exhibits a very high intrinsic GTPase hydrolysis rate. Involved in the addition of a carboxymethylaminomethyl (cmnm) group at the wobble position (U34) of certain tRNAs, forming tRNA-cmnm(5)s(2)U34. This Roseiflexus sp. (strain RS-1) protein is tRNA modification GTPase MnmE.